Reading from the N-terminus, the 315-residue chain is Polyprenyl transferase mpaA (315 aa).

Transmembrane regions (helical) follow at residues Ile-40 to Ala-60, Leu-84 to Phe-103, Ile-118 to Leu-135, Val-143 to Trp-163, Gly-174 to Phe-194, Leu-224 to Ile-244, Trp-248 to Phe-268, and Ile-279 to Gly-299.

It belongs to the UbiA prenyltransferase family. Mg(2+) is required as a cofactor.

The protein resides in the golgi apparatus membrane. It carries out the reaction 5,7-dihydroxy-4-methylphthalide + (2E,6E)-farnesyl diphosphate = 4-farnesyl-3,5-dihydroxy-6-methylphthalide + diphosphate. The protein operates within secondary metabolite biosynthesis; terpenoid biosynthesis. In terms of biological role, polyprenyl transferase; part of the gene cluster that mediates the biosynthesis of mycophenolic acid (MPA), the first isolated antibiotic natural product in the world obtained from a culture of Penicillium brevicompactum in 1893. MpaA is a Golgi apparatus-associated enzyme that catalyzes the prenylation of 5,7-dihydroxy-4,6-dimethylphthalide (DHMP) to yield farnesyl-DHMP (FDHMP). The first step of the pathway is the synthesis of 5-methylorsellinic acid (5MOA) by the cytosolic polyketide synthase mpaC. 5MOA is then converted to the phthalide compound 5,7-dihydroxy-4,6-dimethylphthalide (DHMP) by the endoplasmic reticulum-bound cytochrome P450 monooxygenase mpaDE. MpaDE first catalyzes hydroxylation of 5-MOA to 4,6-dihydroxy-2-(hydroxymethyl)-3-methylbenzoic acid (DHMB). MpaDE then acts as a lactone synthase that catalyzes the ring closure to convert DHMB into DHMP. The next step is the prenylation of DHMP by the Golgi apparatus-associated prenyltransferase mpaA to yield farnesyl-DHMP (FDHMP). The ER-bound oxygenase mpaB then mediates the oxidative cleavage the C19-C20 double bond in FDHMP to yield FDHMP-3C via a mycophenolic aldehyde intermediate. The O-methyltransferase mpaG catalyzes the methylation of FDHMP-3C to yield MFDHMP-3C. After the cytosolic methylation of FDHMP-3C, MFDHMP-3C enters into peroxisomes probably via free diffusion due to its low molecular weight. Upon a peroxisomal CoA ligation reaction, catalyzed by a beta-oxidation component enzyme acyl-CoA ligase ACL891, MFDHMP-3C-CoA would then be restricted to peroxisomes for the following beta-oxidation pathway steps. The peroxisomal beta-oxidation machinery than converts MFDHMP-3C-CoA into MPA_CoA, via a beta-oxidation chain-shortening process. Finally mpaH acts as a peroxisomal acyl-CoA hydrolase with high substrate specificity toward MPA-CoA to release the final product MPA. The protein is Polyprenyl transferase mpaA of Penicillium brevicompactum.